The sequence spans 992 residues: RNA-binding motif protein, X-linked-like-3 (992 aa).

Residues 8 to 86 (EKLFVGGLNL…KAIMVAQTIK (79 aa)) form the RRM domain. Disordered regions lie at residues 91–130 (SSRW…PDDG), 144–169 (APMP…DPGD), 188–207 (PDYC…GRDH), 278–385 (DHLP…DSSS), 397–511 (EEYQ…HRYR), 562–588 (SLDA…SHRY), and 644–992 (NSGG…QSRY). The segment covering 284–296 (YSGGRSSSSNSYS) has biased composition (low complexity). Residues 297–316 (RSDRYGEEGCYEEYRGRSPD) show a composition bias toward basic and acidic residues. The span at 318-334 (HSGGRNSSSNSYGQSHH) shows a compositional bias: low complexity. Residues 335–371 (YGGEGRYEEYRGRYEEYRGRSHEARSGGRSTDAHSGG) are compositionally biased toward basic and acidic residues. Low complexity predominate over residues 454–471 (THSGGRSSSSNSYGQSHR). Residues 472 to 488 (YGGEGHYEYRGRSHDAH) are compositionally biased toward basic and acidic residues. Polar residues-rich tracts occupy residues 564 to 574 (DANSGGRSPNA), 644 to 664 (NSGG…SQSH), and 752 to 774 (DANS…SNSY). Positions 785–798 (HYEEYRGRSHDTHS) are enriched in basic and acidic residues. Over residues 818–828 (GRNSFSNSYGQ) the composition is skewed to polar residues. Basic and acidic residues-rich tracts occupy residues 831–842 (HYGRGGRYEEYQ), 920–948 (SGDH…RPDR), and 981–992 (GRFERGEGQSRY).

This Pan troglodytes (Chimpanzee) protein is RNA-binding motif protein, X-linked-like-3 (RBMXL3).